The primary structure comprises 1748 residues: RANBP2-like and GRIP domain-containing protein 1 (1748 aa).

Threonine 14 carries the post-translational modification Phosphothreonine. 3 TPR repeats span residues 51-84 (PRAH…NPPQ), 575-608 (QKMG…LKII), and 639-672 (EDAH…VSYW). Residues 751–796 (GPLYKNGSLRNADSEIKHSTPSPTKYSLSPSKSYKYSPKTPPRWAE) form a disordered region. Over residues 769–788 (STPSPTKYSLSPSKSYKYSP) the composition is skewed to low complexity. A RanBD1 1 domain is found at 1021–1157 (HFEPVVQMPE…FEECQRLLLD (137 aa)). 2 disordered regions span residues 1198-1233 (TKVT…TLEW) and 1291-1316 (AKLN…ERDG). Positions 1220–1229 (IKPNPENTGP) are enriched in polar residues. Residues 1302–1314 (TDEESDVTQEEER) show a composition bias toward acidic residues. Positions 1318-1454 (YFEPVVPLPD…FDEAKTAQEK (137 aa)) constitute a RanBD1 2 domain. The span at 1565–1578 (NDSETSSVAQSGSE) shows a compositional bias: polar residues. A disordered region spans residues 1565 to 1606 (NDSETSSVAQSGSESKVEPKKCELSKNSDIEQSSDSKVKNLS). Over residues 1579-1602 (SKVEPKKCELSKNSDIEQSSDSKV) the composition is skewed to basic and acidic residues. In terms of domain architecture, GRIP spans 1685–1735 (QEESAANVEHLKNVLLQFIFLKPGSERESLLPVINTMLQLSPEEKGKLAAV).

The protein is RANBP2-like and GRIP domain-containing protein 1 (RGPD1) of Homo sapiens (Human).